Consider the following 209-residue polypeptide: Uracil phosphoribosyltransferase (209 aa).

Residues arginine 79, arginine 104, and 131–139 (DPMLATGGS) each bind 5-phospho-alpha-D-ribose 1-diphosphate. Uracil is bound by residues isoleucine 194 and 199-201 (GDA). Aspartate 200 serves as a coordination point for 5-phospho-alpha-D-ribose 1-diphosphate.

This sequence belongs to the UPRTase family. Mg(2+) serves as cofactor.

It carries out the reaction UMP + diphosphate = 5-phospho-alpha-D-ribose 1-diphosphate + uracil. Its pathway is pyrimidine metabolism; UMP biosynthesis via salvage pathway; UMP from uracil: step 1/1. Allosterically activated by GTP. Its function is as follows. Catalyzes the conversion of uracil and 5-phospho-alpha-D-ribose 1-diphosphate (PRPP) to UMP and diphosphate. In Citrifermentans bemidjiense (strain ATCC BAA-1014 / DSM 16622 / JCM 12645 / Bem) (Geobacter bemidjiensis), this protein is Uracil phosphoribosyltransferase.